The primary structure comprises 263 residues: uncharacterized protein (263 aa).

Position 31–38 (31–38) interacts with ATP; sequence GPTGSGKT.

The protein belongs to the CbbQ/NirQ/NorQ/GpvN family.

This is an uncharacterized protein from Staphylococcus epidermidis (strain ATCC 12228 / FDA PCI 1200).